The following is a 192-amino-acid chain: MGKGCKVVICGLLSVGKTAILEQLLYGNHTIGMEDCETLEDVYMASVETDRGVKEQLHLYDTRGLQKGVELPKHYFSFADGFVLVYSVNNLESFQRVELLKKEIDKFKDKKEVAIVVLGNKLDLSEQRQVDADVAQQWARSEKVKLWEVTVTDRRTLIEPFTLLASKLSQPQSKSSFPLPGRKNKGNSNPEN.

11–18 (GLLSVGKT) is a GTP binding site. The Effector region signature appears at 35-43 (DCETLEDVY). The segment at 58–93 (HLYDTRGLQKGVELPKHYFSFADGFVLVYSVNNLES) is interactions with NFKBIA and NFKBIB. GTP contacts are provided by residues 61–65 (DTRGL) and 120–123 (NKLD). The tract at residues 168-192 (LSQPQSKSSFPLPGRKNKGNSNPEN) is disordered.

Belongs to the small GTPase superfamily. Ras family. KappaB-Ras subfamily. Interacts with both NF-kappa-B inhibitor alpha (NFKBIA) and beta (NFKBIB) in vitro. However, it probably only interacts with NFKBIB in vivo. Forms a complex with NFKBIB and NF-kappa-B heterodimer (p50/NFKB1 and p65/RELA). Also interacts with c-Rel (REL).

It localises to the cytoplasm. Atypical Ras-like protein that acts as a potent regulator of NF-kappa-B activity by preventing the degradation of NF-kappa-B inhibitor beta (NFKBIB) by most signals, explaining why NFKBIB is more resistant to degradation. May act by blocking phosphorylation of NFKBIB and mediating cytoplasmic retention of p65/RELA NF-kappa-B subunit. It is unclear whether it acts as a GTPase. Both GTP- and GDP-bound forms block phosphorylation of NFKBIB. This chain is NF-kappa-B inhibitor-interacting Ras-like protein 1 (Nkiras1), found in Mus musculus (Mouse).